Reading from the N-terminus, the 2363-residue chain is Highly reducing polyketide synthase cnsI (2363 aa).

A Ketosynthase family 3 (KS3) domain is found at 14–440 (PEPIAIIGMS…GSNAHAIVES (427 aa)). Residues Cys-187, His-322, and His-363 each act as for beta-ketoacyl synthase activity in the active site. The tract at residues 546 to 854 (LAFVFTGQGA…FLQVLKSINA (309 aa)) is malonyl-CoA:ACP transacylase (MAT) domain. Catalysis depends on Ser-638, which acts as the For malonyltransferase activity. The segment at 938-1068 (HDLLGSPMDF…GTFTLHYDAR (131 aa)) is N-terminal hotdog fold. A dehydratase (DH) domain region spans residues 938 to 1224 (HDLLGSPMDF…RLDSIASDVS (287 aa)). One can recognise a PKS/mFAS DH domain in the interval 938–1246 (HDLLGSPMDF…LGPVPMSKVP (309 aa)). His-970 (proton acceptor; for dehydratase activity) is an active-site residue. Positions 1089–1246 (TAECETNRDA…LGPVPMSKVP (158 aa)) are C-terminal hotdog fold. The Proton donor; for dehydratase activity role is filled by Asp-1159. The tract at residues 1669-1976 (GGQWVEDRQL…ARQTGISVAI (308 aa)) is enoylreductase (ER) domain. The segment at 2001-2177 (TYLLAGGLGM…PGHSIDIGLV (177 aa)) is catalytic ketoreductase (KRc) domain. Residues 2279-2357 (EDASYVVNQA…VLSEKIAAQS (79 aa)) enclose the Carrier domain. Ser-2317 is modified (O-(pantetheine 4'-phosphoryl)serine).

Its pathway is alkaloid biosynthesis. Highly reducing polyketide synthase; part of the gene cluster that mediates the biosynthesis of communesins, a prominent class of indole alkaloids with great potential as pharmaceuticals. Communesins are biosynthesized by the coupling of tryptamine and aurantioclavine, two building blocks derived from L-tryptophan. The L-tryptophan decarboxylase cnsB converts L-tryptophan to tryptamine, whereas the tryptophan dimethylallyltransferase cnsF converts L-tryptophan to 4-dimethylallyl tryptophan which is further transformed to aurantioclavine by the aurantioclavine synthase cnsA, probably aided by the catalase cnsD. The cytochrome P450 monooxygenase cnsC catalyzes the heterodimeric coupling between the two different indole moieties, tryptamine and aurantioclavine, to construct vicinal quaternary stereocenters and yield the heptacyclic communesin scaffold. The O-methyltransferase cnsE then methylates the communesin scaffold to produce communesin K, the simplest characterized communesin that contains the heptacyclic core. The dioxygenase cnsJ converts communesin K into communesin I. Acylation to introduce the hexadienyl group at position N16 of communesin I by the acyltransferase cnsK leads to the production of communesin B. The hexadienyl group is produced by the highly reducing polyketide synthase cnsI, before being hydrolytically removed from cnsI by the serine hydrolase cnsH, converted into hexadienyl-CoA by the CoA ligase cnsG, and then transferred to communesin I by cnsK. Surprisingly, cnsK may also be a promiscuous acyltransferase that can tolerate a range of acyl groups, including acetyl-, propionyl-, and butyryl-CoA, which lead to communesins A, G and H respectively. The roles of the alpha-ketoglutarate-dependent dioxygenases cnsM and cnsP have still to be determined. The polypeptide is Highly reducing polyketide synthase cnsI (Penicillium expansum (Blue mold rot fungus)).